The primary structure comprises 5412 residues: Mucin-4 (5412 aa).

Residues 1 to 28 (MKGARWRRVPWVSLSCLCLCLLPHVVPG) form the signal peptide. Disordered regions lie at residues 40-87 (TAAP…TTSK) and 142-249 (TSTD…ATSS). The segment at 43–4241 (PVTSTGSTTA…SVSTGHATPL (4199 aa)) is variable number of tandem repeats (VNTR). A compositionally biased stretch (low complexity) spans 142–163 (TSTDSTLGNTEETSTAGTESST). 2 O-linked (GalNAc...) threonine glycosylation sites follow: T154 and T156. Positions 164 to 199 (PVTSAVSITAGQEGQSRTTSWRTSIQDTSASSQNHW) are enriched in polar residues. The span at 200–223 (TRSTQTTRESQTSTLTHRTTSTPS) shows a compositional bias: low complexity. The segment covering 224–249 (FSPSVHNVTGTVSQKTSPSGETATSS) has biased composition (polar residues). N230 carries N-linked (GlcNAc...) asparagine glycosylation. Residue T234 is glycosylated (O-linked (GalNAc...) threonine). Residue N255 is glycosylated (N-linked (GlcNAc...) asparagine). Polar residues-rich tracts occupy residues 267-285 (TTST…SVPV), 306-328 (SPAT…HQTQ), and 358-367 (GFNPSGTVSQ). 16 disordered regions span residues 267-286 (TTST…VPVT), 303-328 (EGQS…HQTQ), 353-383 (LSSP…PSSV), 438-473 (LSPS…SFSP), 488-580 (WPSS…ALLS), 592-853 (TATS…ASAS), 868-963 (VPGT…SGSG), 983-1864 (SSAS…DASS), 1878-2078 (ASSV…TGHA), 2111-2220 (TALH…ASTG), 2232-2814 (SAST…TGHA), 2837-3306 (IPSS…SSVS), 3320-3580 (SAST…VSTG), 3592-3644 (SVST…VSTG), 3656-3756 (SVST…ASTG), and 3769-4223 (VSTG…GHAT). O-linked (GalNAc...) threonine glycosylation is found at T364, T369, and T376. Low complexity predominate over residues 368–383 (ETFPSGETTTSSPSSV). Polar residues-rich tracts occupy residues 450–459 (AFHTQQSEGA), 488–526 (WPSS…TGTA), and 546–557 (TTYSSHSTTLPK). Low complexity-rich tracts occupy residues 558-577 (TTGA…TGEA) and 615-627 (STNH…TSTS). N617 is a glycosylation site (N-linked (GlcNAc...) asparagine). O-linked (GalNAc...) threonine glycans are attached at residues T620, T666, and T688. Residues 628–677 (PQESPAVSQRGHTQAPQTTQESQTTRSVSPMTDTKTVTTPGSSFTASGHS) are compositionally biased toward polar residues. Positions 705-717 (TTQAPTTALQAAP) are enriched in low complexity. Positions 729–746 (GTSLSKTGALTLANSVVS) are enriched in polar residues. The O-linked (GalNAc...) threonine glycan is linked to T747. Residues 756–771 (TSASASTSPDTAAAMT) show a composition bias toward low complexity. Over residues 772-789 (HTHQAESTEASGQTQTSE) the composition is skewed to polar residues. A compositionally biased stretch (low complexity) spans 790–828 (PASSGSRTTSAGTATPSSSGASGTTPSGSEGISTSGETT). Residues T797, T798, T802, T804, T813, and T814 are each glycosylated (O-linked (GalNAc...) threonine). Over residues 829-852 (RFSSNPSRDSHTTQSTTELLSASA) the composition is skewed to polar residues. 3 O-linked (GalNAc...) threonine glycosylation sites follow: T881, T886, and T892. Over residues 885 to 903 (PTGQSSPTSPSASPQETAA) the composition is skewed to low complexity. Over residues 907–928 (MAQTQRTRTSRGSDTISLASQA) the composition is skewed to polar residues. The segment covering 929-950 (TDTFSTVPPTPPSITSTGLTSP) has biased composition (low complexity). 54 O-linked (GalNAc...) threonine glycosylation sites follow: T931, T934, T938, T943, T945, T948, T952, T954, T1003, T1007, T1012, T1019, T1022, T1023, T1028, T1030, T1035, T1039, T1044, T1051, T1055, T1060, T1062, T1067, T1071, T1076, T1083, T1086, T1087, T1092, T1094, T1099, T1103, T1108, T1110, T1115, T1118, T1119, T1124, T1126, T1131, T1135, T1172, T1179, T1182, T1183, T1188, T1195, T1199, T1204, T1236, T1243, T1246, and T1247. Polar residues predominate over residues 951–963 (QTETHTLSPSGSG). Residues 1007–1024 (TPLPVTSPSSVSTGHTTP) are compositionally biased toward low complexity. Polar residues predominate over residues 1028-1054 (TDTSSESTGHVTPLPVTSFSSASTGDS). A compositionally biased stretch (polar residues) spans 1060–1086 (TDTSSASTGHVTPLPVTSLSSASTGDT). Residues 1092–1118 (TDTSSASTGHATSLPVTDTSSVSTGHT) are compositionally biased toward polar residues. 2 stretches are compositionally biased toward polar residues: residues 1124–1150 (TDTS…TGHT) and 1157–1197 (DASS…STGH). Polar residues-rich tracts occupy residues 1204-1213 (TDTSSASTGH) and 1221-1246 (DASS…TGHT). Residues 1252–1262 (TDTSSASTGQA) show a composition bias toward polar residues. Residues 1263–1279 (TSLLVTDTSSVSTGDTT) are compositionally biased toward low complexity. T1278, T1279, T1284, T1286, T1291, T1295, T1300, T1307, T1311, T1316, T1323, T1326, T1332, T1339, T1342, T1343, and T1348 each carry an O-linked (GalNAc...) threonine glycan. A compositionally biased stretch (polar residues) spans 1281–1325 (LPVTSTSSASTGHVTPLHVTSPSSASTGHATPLPVTSLSSASTGD). A compositionally biased stretch (polar residues) spans 1332-1342 (TSPSSASTGDT). 2 stretches are compositionally biased toward polar residues: residues 1349–1358 (DASSVSTGHT) and 1365–1405 (DASS…STGH). Residues T1380, T1387, T1390, T1391, T1396, T1403, T1407, T1412, T1444, T1451, T1454, and T1455 are each glycosylated (O-linked (GalNAc...) threonine). 2 stretches are compositionally biased toward polar residues: residues 1412 to 1421 (TDTSSASTGH) and 1429 to 1454 (DASS…TGHT). The segment covering 1460 to 1470 (TDTSSASTGQA) has biased composition (polar residues). Positions 1471 to 1487 (TSLLVTDTSSVSTGDTT) are enriched in low complexity. O-linked (GalNAc...) threonine glycans are attached at residues T1486, T1487, T1492, T1494, T1499, T1503, T1508, T1515, T1519, T1524, T1531, T1534, T1540, T1547, T1550, T1551, T1556, T1563, T1566, T1567, T1572, T1579, T1582, T1583, T1588, T1590, T1598, T1599, T1604, T1611, T1614, T1615, T1620, T1622, T1627, and T1630. Over residues 1489–1533 (LPVTSTSSASTGHVTPLHVTSPSSASTGHATPLPVTSLSSASTGD) the composition is skewed to polar residues. Over residues 1540–1550 (TSPSSASTGDT) the composition is skewed to polar residues. Residues 1557-1582 (DASSVSTGHTTPLPVTSPSSASTGHT) show a composition bias toward polar residues. Over residues 1588–1614 (TDTSSASKGDTTPLPVTSPSSASTGHT) the composition is skewed to polar residues. Positions 1620 to 1631 (TDTSSASTGDTT) are enriched in low complexity. The segment covering 1633–1661 (LPVTNASSLSTGHATPLHVTSPSSASTGH) has biased composition (polar residues). Residue N1637 is glycosylated (N-linked (GlcNAc...) asparagine). T1659, T1663, T1668, T1670, T1675, T1679, T1716, T1723, T1726, T1727, T1732, T1764, T1766, T1812, T1819, T1822, T1823, T1828, T1835, T1838, T1839, T1844, T1854, and T1855 each carry an O-linked (GalNAc...) threonine glycan. A compositionally biased stretch (low complexity) spans 1668–1679 (TSTSSASTGHAT). 3 stretches are compositionally biased toward polar residues: residues 1701–1741 (DVSS…STGH), 1749–1773 (DASS…STAH), and 1812–1822 (TSPSSASTGDT). A compositionally biased stretch (low complexity) spans 1828-1840 (TDASSASTGDTTS). Composition is skewed to polar residues over residues 1841–1864 (LPVT…DASS), 1892–1902 (TDTNSASTGDT), and 1909–1950 (DASS…SGHT). Residues T1931, T1934, T1935, T1940, T1950, T1951, T1956, T1963, T1995, T1999, T2004, T2006, T2015, T2020, T2027, T2030, T2031, T2036, T2038, T2047, T2052, T2062, T2063, T2132, T2137, T2139, T2142, T2143, T2148, T2150, T2155, T2159, T2164, T2180, T2182, T2187, T2191, T2196, T2198, T2203, T2207, T2244, T2254, and T2255 are each glycosylated (O-linked (GalNAc...) threonine). The segment covering 1957 to 1981 (DASSVPTGHATSLPVTDASSVSTGH) has biased composition (polar residues). Over residues 2004 to 2030 (TDTSSVSTGQATPLPVTSLSSASTGDT) the composition is skewed to polar residues. The segment covering 2036–2077 (TDTSSASTGQDTPLPVTSLSSVSTGDTTPLPVTNPSSASTGH) has biased composition (polar residues). A compositionally biased stretch (low complexity) spans 2125–2146 (DTTPLPVTSPSSTSTGDTTPLP). Over residues 2148 to 2189 (TETSSVSTGHATSLPVTDTSSASTGHATSLPVTDTSSASTGH) the composition is skewed to polar residues. 2 stretches are compositionally biased toward polar residues: residues 2196-2219 (TDTS…SAST) and 2232-2254 (SAST…TGDT). Residues 2261–2270 (DASSVSTGHA) show a composition bias toward polar residues. The span at 2271–2283 (TSLPVTSLSSVST) shows a compositional bias: low complexity. Residues T2283, T2286, T2287, T2292, T2299, T2303, T2308, T2324, T2331, T2334, T2335, T2340, T2347, T2351, T2356, T2363, T2366, T2367, T2372, T2382, T2383, T2388, T2395, T2398, T2399, and T2406 are each glycosylated (O-linked (GalNAc...) threonine). Over residues 2284-2301 (GDTTPLPVTSPSSASTGH) the composition is skewed to polar residues. The segment covering 2309–2349 (DASSASTGHATPLPVTSLSSASTGDTTPLPVTSPSSASTGH) has biased composition (polar residues). Low complexity predominate over residues 2366–2399 (TTPLPVTSSSSASSGHTTPLPVTDASSASTGDTT). Composition is skewed to polar residues over residues 2404–2413 (TDTSSASTGH) and 2421–2445 (GLSS…STGH). A glycan (N-linked (GlcNAc...) asparagine) is linked at N2437. 14 O-linked (GalNAc...) threonine glycosylation sites follow: T2452, T2454, T2459, T2462, T2463, T2468, T2500, T2507, T2510, T2511, T2516, T2518, T2523, and T2526. Residues 2452–2471 (TSTSSASTGDTTPLPGTDTS) show a composition bias toward low complexity. A compositionally biased stretch (polar residues) spans 2485–2510 (DASSVSTGDTTRLPVTSPSSASTGHT). Over residues 2517–2573 (DTPSASTGDTTPLPVTNASSLSTRHATSLHVTSPSSASTGHATSLPVTDTSAASTGH) the composition is skewed to polar residues. N2533 is a glycosylation site (N-linked (GlcNAc...) asparagine). O-linked (GalNAc...) threonine glycans are attached at residues T2564, T2566, T2571, T2575, T2580, T2582, T2587, T2590, T2591, T2596, T2598, T2619, T2622, T2623, T2628, T2660, T2667, T2670, T2671, T2676, T2683, T2687, T2692, and T2694. The segment covering 2580–2591 (TSTSSASTGDTT) has biased composition (low complexity). Polar residues-rich tracts occupy residues 2597 to 2637 (DTYS…STGH) and 2645 to 2691 (DASS…SLPV). Over residues 2692–2704 (TDTSSASTGDTTS) the composition is skewed to low complexity. A compositionally biased stretch (polar residues) spans 2705–2723 (LPVTDTSSAYTGDTTSLPV). Residues 2724–2735 (TDTSSSSTGDTT) are compositionally biased toward low complexity. O-linked (GalNAc...) threonine glycans are attached at residues T2740, T2742, T2750, T2751, T2756, T2758, T2763, and T2767. Positions 2740–2750 (TETSSVSTGDT) are enriched in polar residues. The span at 2756-2798 (TDTSSASTGHATPLPVTNTSSVSTGHATPLHVTSPSSASTGHT) shows a compositional bias: polar residues. The N-linked (GlcNAc...) asparagine glycan is linked to N2773. 7 O-linked (GalNAc...) threonine glycosylation sites follow: T2779, T2783, T2788, T2795, T2798, T2799, and T2804. Composition is skewed to polar residues over residues 2805 to 2814 (DASSVSTGHA) and 2837 to 2846 (IPSSASSGHT). O-linked (GalNAc...) threonine glycans are attached at residues T2846, T2847, and T2852. The span at 2853-2877 (DASSVSTGHATSLPVTDASSVSTGH) shows a compositional bias: polar residues. A compositionally biased stretch (low complexity) spans 2895–2907 (TPLPLTSLSSVST). O-linked (GalNAc...) threonine glycosylation is found at T2910, T2911, T2916, T2918, T2923, T2927, T2932, T2939, T2942, T2943, T2948, T2950, T2955, T2959, T2966, T2971, and T2975. A compositionally biased stretch (polar residues) spans 2916–2942 (TDTSSASTGQATPLPVTSLSSVSTGDT). The span at 2948–2973 (TDTSSASTGHATSLPVTDTSSASTGH) shows a compositional bias: polar residues. Polar residues-rich tracts occupy residues 2980–2989 (TDTSSASTGH) and 3009–3037 (LPVT…STGH). Residues T3023, T3028, T3035, and T3039 are each glycosylated (O-linked (GalNAc...) threonine). The segment covering 3044 to 3069 (TDTSSASTGHANPLHVTSPSSASTGH) has biased composition (polar residues). Residues T3071, T3076, T3078, T3083, T3087, T3092, T3099, T3102, T3103, T3108, T3115, T3118, T3119, T3124, T3126, T3131, T3135, T3140, T3142, T3147, T3150, T3151, T3156, T3158, T3163, T3167, T3172, T3179, T3182, T3183, T3188, T3220, T3227, T3230, T3231, T3236, T3243, T3247, T3252, and T3254 are each glycosylated (O-linked (GalNAc...) threonine). Polar residues predominate over residues 3076–3118 (TDTSSASTGHATPLPVTSLSSVSTGDTTPLPVTSPSSASTGHT). Polar residues predominate over residues 3124 to 3134 (TDTSSASTGQA). Over residues 3140–3151 (TSTSSASTGDTT) the composition is skewed to low complexity. Polar residues-rich tracts occupy residues 3156–3197 (TDTS…STGH) and 3205–3251 (DASS…SLPV). The span at 3252-3264 (TDTSSASTGDTTS) shows a compositional bias: low complexity. The segment covering 3265-3283 (LPVTDTSSAYTGDTTSLPV) has biased composition (polar residues). The span at 3284–3295 (TDTSSSSTGDTT) shows a compositional bias: low complexity. O-linked (GalNAc...) threonine glycans are attached at residues T3294, T3332, T3339, T3342, T3343, T3348, T3350, T3355, and T3359. Polar residues predominate over residues 3320-3337 (SASTGHATPLHVTSPSSA). Residues 3338 to 3356 (STGDTTPVPVTDTSSVSTG) show a composition bias toward low complexity. Polar residues-rich tracts occupy residues 3365–3374 (GLSSASTGDT) and 3381–3405 (DISS…STGD). An N-linked (GlcNAc...) asparagine glycan is attached at N3397. Residues T3398, T3403, T3406, T3412, T3419, T3423, T3428, T3430, T3435, T3439, and T3444 are each glycosylated (O-linked (GalNAc...) threonine). The segment covering 3412-3421 (TSPSSASTGH) has biased composition (polar residues). The span at 3428 to 3471 (TSTSSASTGHATPVPVTSTSSASTGHTTPLPVTDTSSASTGDTT) shows a compositional bias: low complexity. Residue S3445 is glycosylated (O-linked (GalNAc...) serine). 99 O-linked (GalNAc...) threonine glycosylation sites follow: T3446, T3451, T3454, T3455, T3460, T3462, T3467, T3470, T3471, T3476, T3483, T3486, T3487, T3492, T3499, T3502, T3504, T3508, T3515, T3519, T3524, T3526, T3531, T3535, T3540, T3547, T3550, T3551, T3556, T3567, T3614, T3615, T3622, T3678, T3679, T3686, T3691, T3695, T3700, T3710, T3711, T3716, T3718, T3723, T3727, T3732, T3739, T3743, T3748, T3780, T3787, T3790, T3791, T3796, T3798, T3803, T3807, T3812, T3822, T3823, T3828, T3835, T3839, T3844, T3851, T3854, T3860, T3867, T3871, T3876, T3883, T3886, T3887, T3892, T3894, T3899, T3903, T3935, T3940, T3942, T3947, T3950, T3951, T3956, T3958, T3963, T3967, T3972, T3979, T3983, T3988, T3990, T3995, T3999, T4004, T4006, T4011, T4015, and T4020. The segment covering 3473–3486 (LPVTSPSSASTGHT) has biased composition (polar residues). Residues 3493–3517 (IPSSASTGDTSTLPVTGASSASTGH) show a composition bias toward polar residues. A compositionally biased stretch (polar residues) spans 3524-3550 (TDTSSVSTGHATPLPVTSLSSVSTGDT). The span at 3557–3580 (DASSASTGQATPLPVTSLSSVSTG) shows a compositional bias: polar residues. A compositionally biased stretch (low complexity) spans 3604-3615 (TDTSSASTGDTT). Polar residues predominate over residues 3620–3644 (TDTSSASTGQATPLPVTSLSSVSTG). Positions 3668-3679 (TDTSSASTGDTT) are enriched in low complexity. Positions 3684 to 3694 (TDTSSASTGQA) are enriched in polar residues. Residues 3710 to 3728 (TTPLPVTSTSSVSTGHVTP) are compositionally biased toward low complexity. The segment covering 3730–3741 (HVTSPSSASTGH) has biased composition (polar residues). Over residues 3780–3791 (TDASSASTGDTT) the composition is skewed to low complexity. Residues 3796-3822 (TDTSSASTGQATPLPVTSLSSVSTGDT) are compositionally biased toward polar residues. Positions 3860 to 3869 (TSPSSASTGH) are enriched in polar residues. A compositionally biased stretch (polar residues) spans 3877 to 3886 (GLSSASTGDT). Polar residues predominate over residues 3892–3901 (TDTSSASTRH). A compositionally biased stretch (low complexity) spans 3940–3951 (TSTSSASTGDTT). Polar residues predominate over residues 3956-3981 (TDTSSVSTGHATSLPVTSRSSASTGH). Over residues 3988 to 3997 (TDTSSVSTGH) the composition is skewed to polar residues. A compositionally biased stretch (low complexity) spans 3999–4011 (TPLPVTSTSSVST). Residues 4018-4029 (PVTSPSSASTGH) show a composition bias toward polar residues. S4021, S4023, S4024, and S4026 each carry an O-linked (GalNAc...) serine glycan. O-linked (GalNAc...) threonine glycosylation is found at T4027, T4031, and T4036. Residues 4030 to 4047 (ATPVPVTSTSSASTGDTT) are compositionally biased toward low complexity. S4037 is a glycosylation site (O-linked (GalNAc...) serine). O-linked (GalNAc...) threonine glycosylation is found at T4038, T4043, T4046, and T4047. The span at 4049 to 4093 (LPVTNASSLSTGHATPLHVTSPSSASRGDTSTLPVTDASSASTGH) shows a compositional bias: polar residues. N-linked (GlcNAc...) asparagine glycosylation is present at N4053. Residues T4078 and T4084 are each glycosylated (O-linked (GalNAc...) threonine). Residues 4095 to 4107 (TPLPLTSLSSVST) are compositionally biased toward low complexity. Residues T4110, T4111, T4116, T4118, T4123, T4127, T4132, T4139, T4142, T4143, T4148, T4158, T4159, T4164, T4171, T4175, T4180, T4182, T4187, T4190, T4191, T4196, T4198, T4203, T4207, T4212, T4214, T4219, T4223, and T4239 are each glycosylated (O-linked (GalNAc...) threonine). The span at 4116–4142 (TDTSSASTGQATPLPVTSLSSVSTGDT) shows a compositional bias: polar residues. Over residues 4149–4173 (IPSSASSGHTTSLPVTDASSVSTGH) the composition is skewed to polar residues. A compositionally biased stretch (low complexity) spans 4180–4191 (TSTSSASTGDTT). Residues 4196–4205 (TDTSSASTGH) are compositionally biased toward polar residues. The span at 4212 to 4223 (TDTSSASTGHAT) shows a compositional bias: polar residues. Over residues 4242–4254 (AVSSATSASTVSS) the composition is skewed to low complexity. Residues 4242–4288 (AVSSATSASTVSSDSPLKMETPGMTTPSLKTDGGRRTATSPPPTTSQ) are disordered. T4272, T4278, T4280, T4289, T4293, and T4297 each carry an O-linked (GalNAc...) threonine glycan. The NIDO domain occupies 4397 to 4552 (PFWDDADFST…GLQFYRLHRE (156 aa)). One can recognise an AMOP domain in the interval 4553-4668 (ERPNYRLECL…YLCALYQQRR (116 aa)). The VWFD domain occupies 4680–4880 (QPAWMFGDPH…TWQINGTGLL (201 aa)). 16 N-linked (GlcNAc...) asparagine glycosylation sites follow: N4715, N4768, N4787, N4796, N4831, N4852, N4875, N4902, N4928, N4946, N4982, N4997, N5045, N5052, N5100, and N5119. The EGF-like 1 domain occupies 5118 to 5157 (QNQSCPVNYCYNQGHCYISQTLGCQPMCTCPPAFTDSRCF). 3 cysteine pairs are disulfide-bonded: C5122-C5133, C5127-C5145, and C5147-C5156. Residues N5185, N5192, and N5292 are each glycosylated (N-linked (GlcNAc...) asparagine). The EGF-like 2 domain maps to 5321-5360 (VSPCSRGYCDHGGQCQHLPSGPRCSCVSFSIYTAWGEHCE). 3 cysteine pairs are disulfide-bonded: C5324-C5335, C5329-C5344, and C5346-C5359. The chain crosses the membrane as a helical span at residues 5369-5389 (FFGIFFGALGGLLLLGVGTFV).

A heterodimeric complex, composed of a mucin-4 alpha chain and a cysteine-rich transmembrane mucin-4 beta chain. Mucin-4 beta chain interacts with ERBB2 via the EGF-like domain 1. In nonpolarized cells, associates with ERBB2 and ERBB3. Proteolytically cleaved into 2 chains, mucin-4 alpha chain and mucin-4 beta chain. In terms of processing, highly O-glycosylated. Post-translationally, is predominantly N-glycosylated. Expressed in the thymus, thyroid, lung, trachea, esophagus, stomach, small intestine, colon, testis, prostate, ovary, uterus, placenta, and mammary and salivary glands. Expressed in carcinomas arising from some of these epithelia, such as lung cancers, squamous cell carcinomas of the upper aerodigestive tract, mammary carcinomas, biliary tract, colon, and cervix cancers. Minimally or not expressed in the normal pancreas or chronic pancreatitis, but is highly expressed in pancreatic tumors and pancreatic tumor cell lines.

The protein localises to the cell membrane. It localises to the secreted. In terms of biological role, membrane-bound mucin, a family of highly glycosylated proteins that constitute the major component of the mucus, the slimy and viscous secretion covering epithelial surfaces. These glycoproteins play important roles in the protection of the epithelium and are implicated in epithelial renewal and differentiation. Regulates cellular behavior through both anti-adhesive effects on cell-cell and cell-extracellular matrix interactions and its ability to act as an intramembrane ligand for ERBB2. Plays an important role in proliferation and differentiation of epithelial cells by inducing specific phosphorylation of ERBB2. In polarized epithelial cells, segregates ERBB2 and other ERBB receptors and prevents ERBB2 from acting as a coreceptor. The interaction with ERBB2 leads to enhanced expression of CDKN1B. The formation of a MUC4-ERBB2-ERBB3-NRG1 complex leads to down-regulation of CDKN1B, resulting in repression of apoptosis and stimulation of proliferation. Its ability to promote tumor growth may be mainly due to repression of apoptosis as opposed to proliferation. This Homo sapiens (Human) protein is Mucin-4 (MUC4).